Consider the following 323-residue polypeptide: 2-methylene-furan-3-one reductase (323 aa).

NADP(+) is bound by residues Lys59, 174 to 175 (GV), 197 to 200 (STKK), Tyr216, Ile254, 265 to 267 (FVL), and 312 to 313 (RA). Lys59 serves as a coordination point for substrate.

It belongs to the zinc-containing alcohol dehydrogenase family. Quinone oxidoreductase subfamily. As to quaternary structure, monomer. Post-translationally, the N-terminus is blocked. In terms of tissue distribution, expressed in parenchyma tissues of red fruits. Not found in vascular tissues. Also detected in the achenes.

The enzyme catalyses 4-hydroxy-2,5-dimethyl-furan-3(2H)-one + NADP(+) = 4-hydroxy-5-methyl-2-methylenefuran-3(2H)-one + NADPH + H(+). In terms of biological role, enone oxidoreductase involved in the biosynthesis of 4-hydroxy-2,5-dimethyl-3(2H)-furanone (HDMF or furaneol), the key flavor compound in strawberries. Can use both NADH and NADPH as the electron donor. This Fragaria ananassa (Strawberry) protein is 2-methylene-furan-3-one reductase (EO).